An 879-amino-acid chain; its full sequence is Alanine--tRNA ligase (879 aa).

His566, His570, Cys668, and His672 together coordinate Zn(2+).

Belongs to the class-II aminoacyl-tRNA synthetase family. Requires Zn(2+) as cofactor.

The protein resides in the cytoplasm. The catalysed reaction is tRNA(Ala) + L-alanine + ATP = L-alanyl-tRNA(Ala) + AMP + diphosphate. Its function is as follows. Catalyzes the attachment of alanine to tRNA(Ala) in a two-step reaction: alanine is first activated by ATP to form Ala-AMP and then transferred to the acceptor end of tRNA(Ala). Also edits incorrectly charged Ser-tRNA(Ala) and Gly-tRNA(Ala) via its editing domain. The sequence is that of Alanine--tRNA ligase from Clostridium botulinum (strain Hall / ATCC 3502 / NCTC 13319 / Type A).